A 360-amino-acid chain; its full sequence is DNA replication and repair protein RecF (360 aa).

30-37 (GHNGSGKT) contacts ATP.

The protein belongs to the RecF family.

The protein resides in the cytoplasm. The RecF protein is involved in DNA metabolism; it is required for DNA replication and normal SOS inducibility. RecF binds preferentially to single-stranded, linear DNA. It also seems to bind ATP. This is DNA replication and repair protein RecF from Haemophilus ducreyi (strain 35000HP / ATCC 700724).